The chain runs to 293 residues: Cytidine deaminase 6 (293 aa).

2 CMP/dCMP-type deaminase domains span residues 16–147 (RGPS…FGPD) and 178–293 (EDCS…TNKN). Residue 57–59 (NVE) participates in substrate binding. His-70 contacts Zn(2+). The active-site Proton donor is Glu-72. Cys-103 and Cys-106 together coordinate Zn(2+).

Belongs to the cytidine and deoxycytidylate deaminase family. Homodimer. Requires Zn(2+) as cofactor.

The enzyme catalyses cytidine + H2O + H(+) = uridine + NH4(+). The catalysed reaction is 2'-deoxycytidine + H2O + H(+) = 2'-deoxyuridine + NH4(+). This enzyme scavenges exogenous and endogenous cytidine and 2'-deoxycytidine for UMP synthesis. The protein is Cytidine deaminase 6 (CDA6) of Arabidopsis thaliana (Mouse-ear cress).